The chain runs to 325 residues: Elongation factor P--(R)-beta-lysine ligase (325 aa).

Position 76 to 78 (76 to 78 (SPE)) interacts with substrate. ATP contacts are provided by residues 100–102 (RNE) and N109. Substrate is bound at residue Y118. 244-245 (EL) is an ATP binding site. E251 serves as a coordination point for substrate. Position 300 (G300) interacts with ATP.

It belongs to the class-II aminoacyl-tRNA synthetase family. EpmA subfamily. As to quaternary structure, homodimer.

The catalysed reaction is D-beta-lysine + L-lysyl-[protein] + ATP = N(6)-((3R)-3,6-diaminohexanoyl)-L-lysyl-[protein] + AMP + diphosphate + H(+). Functionally, with EpmB is involved in the beta-lysylation step of the post-translational modification of translation elongation factor P (EF-P). Catalyzes the ATP-dependent activation of (R)-beta-lysine produced by EpmB, forming a lysyl-adenylate, from which the beta-lysyl moiety is then transferred to the epsilon-amino group of a conserved specific lysine residue in EF-P. The sequence is that of Elongation factor P--(R)-beta-lysine ligase from Pectobacterium atrosepticum (strain SCRI 1043 / ATCC BAA-672) (Erwinia carotovora subsp. atroseptica).